We begin with the raw amino-acid sequence, 681 residues long: Mating-type protein beta1-1 (681 aa).

A DNA-binding region (homeobox; TALE-type) is located at residues 165 to 227 (DKNEPTSPTP…DARRRIGWNE (63 aa)). A compositionally biased stretch (basic and acidic residues) spans 307–318 (LKNDEARRKREA). Disordered regions lie at residues 307 to 341 (LKNDEARRKREASTVGIINQRARHAYPTPERSPAS), 353 to 381 (AIDSDKLPSVGRKRRRSLESDETVSSPLC), and 394 to 466 (SPVK…SDPF). The segment covering 413-430 (TSAAPSPQPSLLPKLTPT) has biased composition (low complexity).

The protein belongs to the TALE/M-ATYP homeobox family. As to quaternary structure, may dimerize.

Its subcellular location is the nucleus. Has a major regulatory role in sexual and asexual development. It may bind DNA itself or it may have a role in preventing DNA-binding of another protein. In Coprinopsis cinerea (Inky cap fungus), this protein is Mating-type protein beta1-1.